Reading from the N-terminus, the 428-residue chain is MDHYSDQGGDGIELLDLLFDKNDGILRYENMGQQNNQLWPVQDPHMMMTPQGNEDFFNALIGGSDSVSGSPVWSPSPSDSGISEDPHSDHIDSPPPNASPPMEPHIVVSQTQHSLNINFPFDFNGWETGFLPDQSGGTQCASETPQAQQTTGFPLTVKDLLLSGTPEPAAKVSQQSYQELILTEDEKRLLAKEGMTLPNQFPLTKYEERILKKIRRKIRNKQSAQESRKKKKEYIDGLESRMAACSAHNHELQRKVFQLEKCNISLMEQLRRLQALVMNGSNKPVQAGTCVLVLLLSFTLILLPNLKPFTDTKVSQHGDFSPMRVQSRSLHNLQSSRVLRNLDHPYSMTENAKILPRFPEDKTMEEIASLLGRLHRRPQFTEYDPESHNHSFDQHDEHHHGDPITGHVATVTLNPRRGSRRSPHADDM.

Residues 1–286 lie on the Cytoplasmic side of the membrane; that stretch reads MDHYSDQGGD…VMNGSNKPVQ (286 aa). Over residues 67–83 the composition is skewed to low complexity; it reads VSGSPVWSPSPSDSGIS. Residues 67-104 are disordered; sequence VSGSPVWSPSPSDSGISEDPHSDHIDSPPPNASPPMEP. Residues 93 to 103 are compositionally biased toward pro residues; that stretch reads SPPPNASPPME. The 64-residue stretch at 210-273 folds into the bZIP domain; it reads ILKKIRRKIR…ISLMEQLRRL (64 aa). The segment at 212–241 is basic motif; that stretch reads KKIRRKIRNKQSAQESRKKKKEYIDGLESR. A leucine-zipper region spans residues 252–273; the sequence is LQRKVFQLEKCNISLMEQLRRL. The helical; Signal-anchor for type II membrane protein transmembrane segment at 287–303 threads the bilayer; it reads AGTCVLVLLLSFTLILL. The Lumenal segment spans residues 304–428; it reads PNLKPFTDTK…SRRSPHADDM (125 aa). The tract at residues 381 to 428 is disordered; sequence TEYDPESHNHSFDQHDEHHHGDPITGHVATVTLNPRRGSRRSPHADDM. Residues 385–402 are compositionally biased toward basic and acidic residues; that stretch reads PESHNHSFDQHDEHHHGD. Asparagine 389 carries N-linked (GlcNAc...) asparagine glycosylation.

It belongs to the bZIP family. ATF subfamily. As to quaternary structure, binds DNA as a dimer. In terms of processing, controlled by regulated intramembrane proteolysis (RIP). A fragment containing the cytoplasmic transcription factor domain is released by proteolysis. The cleavage seems to be performed sequentially by site-1 and site-2 proteases.

The protein localises to the endoplasmic reticulum membrane. Its subcellular location is the nucleus. In terms of biological role, transcriptional activator. Binds the cAMP response element (CRE). Activates transcription through box-B element and CRE. Seems to function synergistically with atf6. Regulates FGF21 transcription. This chain is Cyclic AMP-responsive element-binding protein 3-like protein 3-B (creb3l3b), found in Danio rerio (Zebrafish).